The primary structure comprises 229 residues: Peptidyl-tRNA hydrolase (229 aa).

TRNA is bound at residue Tyr17. The active-site Proton acceptor is the His22. TRNA contacts are provided by Phe74, Asn76, and Asn122. Residues 194-229 (AGKTTRPRKPVRQTANAEASNNSPEASATPQNKDNT) are disordered. The segment covering 207–223 (TANAEASNNSPEASATP) has biased composition (low complexity).

Belongs to the PTH family. Monomer.

The protein resides in the cytoplasm. It catalyses the reaction an N-acyl-L-alpha-aminoacyl-tRNA + H2O = an N-acyl-L-amino acid + a tRNA + H(+). Functionally, hydrolyzes ribosome-free peptidyl-tRNAs (with 1 or more amino acids incorporated), which drop off the ribosome during protein synthesis, or as a result of ribosome stalling. Catalyzes the release of premature peptidyl moieties from peptidyl-tRNA molecules trapped in stalled 50S ribosomal subunits, and thus maintains levels of free tRNAs and 50S ribosomes. This chain is Peptidyl-tRNA hydrolase, found in Desulfovibrio desulfuricans (strain ATCC 27774 / DSM 6949 / MB).